The chain runs to 266 residues: Tryptophan synthase alpha chain (266 aa).

Active-site proton acceptor residues include Glu-52 and Asp-63.

This sequence belongs to the TrpA family. Tetramer of two alpha and two beta chains.

It carries out the reaction (1S,2R)-1-C-(indol-3-yl)glycerol 3-phosphate + L-serine = D-glyceraldehyde 3-phosphate + L-tryptophan + H2O. It functions in the pathway amino-acid biosynthesis; L-tryptophan biosynthesis; L-tryptophan from chorismate: step 5/5. Its function is as follows. The alpha subunit is responsible for the aldol cleavage of indoleglycerol phosphate to indole and glyceraldehyde 3-phosphate. The sequence is that of Tryptophan synthase alpha chain from Nocardia farcinica (strain IFM 10152).